We begin with the raw amino-acid sequence, 312 residues long: 2-phospho-L-lactate transferase (312 aa).

2 residues coordinate 7,8-didemethyl-8-hydroxy-5-deazariboflavin: D50 and K89.

This sequence belongs to the CofD family. As to quaternary structure, homodimer. It depends on Mg(2+) as a cofactor.

The enzyme catalyses (2S)-lactyl-2-diphospho-5'-guanosine + 7,8-didemethyl-8-hydroxy-5-deazariboflavin = oxidized coenzyme F420-0 + GMP + H(+). Its pathway is cofactor biosynthesis; coenzyme F420 biosynthesis. Its function is as follows. Catalyzes the transfer of the 2-phospholactate moiety from (2S)-lactyl-2-diphospho-5'-guanosine to 7,8-didemethyl-8-hydroxy-5-deazariboflavin (FO) with the formation of oxidized coenzyme F420-0 and GMP. The polypeptide is 2-phospho-L-lactate transferase (Methanococcus vannielii (strain ATCC 35089 / DSM 1224 / JCM 13029 / OCM 148 / SB)).